A 208-amino-acid polypeptide reads, in one-letter code: NADH-quinone oxidoreductase subunit I 2 (208 aa).

2 consecutive 4Fe-4S ferredoxin-type domains span residues 79-109 and 119-148; these read ILVE…IEGK and SVFN…QTDI. [4Fe-4S] cluster-binding residues include Cys-88, Cys-91, Cys-94, Cys-98, Cys-128, Cys-131, Cys-134, and Cys-138.

The protein belongs to the complex I 23 kDa subunit family. As to quaternary structure, NDH-1 is composed of 14 different subunits. Subunits NuoA, H, J, K, L, M, N constitute the membrane sector of the complex. It depends on [4Fe-4S] cluster as a cofactor.

The protein resides in the cell inner membrane. It carries out the reaction a quinone + NADH + 5 H(+)(in) = a quinol + NAD(+) + 4 H(+)(out). NDH-1 shuttles electrons from NADH, via FMN and iron-sulfur (Fe-S) centers, to quinones in the respiratory chain. The immediate electron acceptor for the enzyme in this species is believed to be ubiquinone. Couples the redox reaction to proton translocation (for every two electrons transferred, four hydrogen ions are translocated across the cytoplasmic membrane), and thus conserves the redox energy in a proton gradient. The polypeptide is NADH-quinone oxidoreductase subunit I 2 (Aquifex aeolicus (strain VF5)).